The primary structure comprises 222 residues: Superoxide dismutase [Mn], mitochondrial (222 aa).

Residues 1 to 24 (MLSRAACSTSRRLVPALSVLGSRQ) constitute a mitochondrion transit peptide. H50 contributes to the Mn(2+) binding site. Y58 is modified (3'-nitrotyrosine). K68 and K75 each carry N6-acetyllysine; alternate. N6-succinyllysine; alternate is present on residues K68 and K75. Residue H98 participates in Mn(2+) binding. Residues K122 and K130 each carry the N6-acetyllysine; alternate modification. Residues K122 and K130 each carry the N6-succinyllysine; alternate modification. Mn(2+) contacts are provided by D183 and H187. K202 is modified (N6-acetyllysine).

This sequence belongs to the iron/manganese superoxide dismutase family. As to quaternary structure, homotetramer. Mn(2+) is required as a cofactor. In terms of processing, nitrated under oxidative stress. Nitration coupled with oxidation inhibits the catalytic activity. Post-translationally, acetylation at Lys-122 decreases enzymatic activity. Deacetylated by SIRT3 upon exposure to ionizing radiations or after long fasting. Polyubiquitinated; leading to proteasomal degradation. Deubiquitinated by USP36 which increases protein stability.

It is found in the mitochondrion matrix. The enzyme catalyses 2 superoxide + 2 H(+) = H2O2 + O2. Functionally, destroys superoxide anion radicals which are normally produced within the cells and which are toxic to biological systems. The protein is Superoxide dismutase [Mn], mitochondrial (SOD2) of Bos taurus (Bovine).